A 328-amino-acid chain; its full sequence is Malate dehydrogenase 1 (328 aa).

12–18 is an NAD(+) binding site; that stretch reads GAAGQIG. Positions 95 and 101 each coordinate substrate. NAD(+) contacts are provided by residues Asn108, Gln115, and 132 to 134; that span reads VGN. Substrate is bound by residues Asn134 and Arg165. Catalysis depends on His190, which acts as the Proton acceptor.

This sequence belongs to the LDH/MDH superfamily. MDH type 2 family.

It catalyses the reaction (S)-malate + NAD(+) = oxaloacetate + NADH + H(+). Catalyzes the reversible oxidation of malate to oxaloacetate. This Albidiferax ferrireducens (strain ATCC BAA-621 / DSM 15236 / T118) (Rhodoferax ferrireducens) protein is Malate dehydrogenase 1.